The following is a 1022-amino-acid chain: Probable E3 ubiquitin-protein ligase HERC6 (1022 aa).

RCC1 repeat units follow at residues 41 to 92 (NHRV…AVCH), 93 to 145 (KGRV…ALSK), 147 to 198 (SQVF…ALSL), 200 to 253 (GTSF…VLTQ), and 254 to 304 (DGKV…AYVH). In terms of domain architecture, HECT spans 693-1017 (EATDFCKVLV…INNNRGFVSP (325 aa)). Residue Cys985 is the Glycyl thioester intermediate of the active site.

Detected in brain, heart, placenta and testis.

It is found in the cytoplasm. Its subcellular location is the cytosol. The enzyme catalyses S-ubiquitinyl-[E2 ubiquitin-conjugating enzyme]-L-cysteine + [acceptor protein]-L-lysine = [E2 ubiquitin-conjugating enzyme]-L-cysteine + N(6)-ubiquitinyl-[acceptor protein]-L-lysine.. It participates in protein modification; protein ubiquitination. In terms of biological role, E3 ubiquitin-protein ligase which accepts ubiquitin from an E2 ubiquitin-conjugating enzyme in the form of a thioester and then directly transfers the ubiquitin to targeted substrates. The chain is Probable E3 ubiquitin-protein ligase HERC6 (HERC6) from Homo sapiens (Human).